Consider the following 549-residue polypeptide: Myotubularin-related protein 9 (549 aa).

At M1 the chain carries N-acetylmethionine. The GRAM domain maps to 4 to 99; the sequence is AELIKTPRVD…LNIASSIEAL (96 aa). One can recognise a Myotubularin phosphatase domain in the interval 123-498; that stretch reads GWHSFLPEQE…QSLQLWEGIF (376 aa). The stretch at 508 to 542 forms a coiled coil; the sequence is LDEAYEEMVNIIEYNKELQAKVNLLRRQLAELETE. S548 carries the phosphoserine modification.

Belongs to the protein-tyrosine phosphatase family. Non-receptor class myotubularin subfamily. As to quaternary structure, homodimer. Heterodimer (via C-terminus) with lipid phosphatase MTMR6 (via C-terminus). Heterodimer (via coiled coil domain) with lipid phosphatase MTMR7 (via C-terminus). Heterodimer with lipid phosphatase MTMR8.

Its subcellular location is the cytoplasm. It localises to the cell projection. The protein resides in the ruffle membrane. It is found in the perinuclear region. The protein localises to the endoplasmic reticulum. Its function is as follows. Acts as an adapter for myotubularin-related phosphatases. Increases lipid phosphatase MTMR6 catalytic activity, specifically towards phosphatidylinositol 3,5-bisphosphate, and MTMR6 binding affinity for phosphorylated phosphatidylinositols. Positively regulates lipid phosphatase MTMR7 catalytic activity. Increases MTMR8 catalytic activity towards phosphatidylinositol 3-phosphate. The formation of the MTMR6-MTMR9 complex, stabilizes both MTMR6 and MTMR9 protein levels. Stabilizes MTMR8 protein levels. Plays a role in the late stages of macropinocytosis possibly by regulating MTMR6-mediated dephosphorylation of phosphatidylinositol 3-phosphate in membrane ruffles. Negatively regulates autophagy, in part via its association with MTMR8. Negatively regulates DNA damage-induced apoptosis, in part via its association with MTMR6. Does not bind mono-, di- and tri-phosphorylated phosphatidylinositols, phosphatidic acid and phosphatidylserine. This chain is Myotubularin-related protein 9 (MTMR9), found in Bos taurus (Bovine).